Here is a 122-residue protein sequence, read N- to C-terminus: Basic phospholipase A2 F15 (122 aa).

7 disulfides stabilise this stretch: Cys26–Cys115, Cys28–Cys44, Cys43–Cys95, Cys49–Cys122, Cys50–Cys88, Cys57–Cys81, and Cys75–Cys86. 3 residues coordinate Ca(2+): Tyr27, Gly29, and Gly31. Residue His47 is part of the active site. Position 48 (Asp48) interacts with Ca(2+). The active site involves Asp89.

The protein belongs to the phospholipase A2 family. Group II subfamily. D49 sub-subfamily. As to quaternary structure, when this protein is associated with crotapotin (F5 or F7), it forms the crotoxin protein. It depends on Ca(2+) as a cofactor. In terms of tissue distribution, expressed by the venom gland.

The protein resides in the secreted. The enzyme catalyses a 1,2-diacyl-sn-glycero-3-phosphocholine + H2O = a 1-acyl-sn-glycero-3-phosphocholine + a fatty acid + H(+). With respect to regulation, activated by heparin. Inhibited by its chaperone crotapotin. Its function is as follows. Snake venom phospholipase A2 (PLA2) that shows moderate neurotoxic activity in isolated mouse phrenic nerve diaphragm but shows high neurotoxic activity in a chick biventer cervis preparation. Also shows a high bactericidal effect against both Gram-negative and Gram-positive bacteria. PLA2 catalyzes the calcium-dependent hydrolysis of the 2-acyl groups in 3-sn-phosphoglycerides. This is Basic phospholipase A2 F15 from Crotalus durissus terrificus (South American rattlesnake).